The primary structure comprises 182 residues: UPF0301 protein NMCC_1249 (182 aa).

Belongs to the UPF0301 (AlgH) family.

This Neisseria meningitidis serogroup C (strain 053442) protein is UPF0301 protein NMCC_1249.